A 169-amino-acid chain; its full sequence is Crossover junction endodeoxyribonuclease RuvC (169 aa).

Active-site residues include Asp11, Glu71, and Asp143. Mg(2+) contacts are provided by Asp11, Glu71, and Asp143.

It belongs to the RuvC family. As to quaternary structure, homodimer which binds Holliday junction (HJ) DNA. The HJ becomes 2-fold symmetrical on binding to RuvC with unstacked arms; it has a different conformation from HJ DNA in complex with RuvA. In the full resolvosome a probable DNA-RuvA(4)-RuvB(12)-RuvC(2) complex forms which resolves the HJ. The cofactor is Mg(2+).

It localises to the cytoplasm. The catalysed reaction is Endonucleolytic cleavage at a junction such as a reciprocal single-stranded crossover between two homologous DNA duplexes (Holliday junction).. The RuvA-RuvB-RuvC complex processes Holliday junction (HJ) DNA during genetic recombination and DNA repair. Endonuclease that resolves HJ intermediates. Cleaves cruciform DNA by making single-stranded nicks across the HJ at symmetrical positions within the homologous arms, yielding a 5'-phosphate and a 3'-hydroxyl group; requires a central core of homology in the junction. The consensus cleavage sequence is 5'-(A/T)TT(C/G)-3'. Cleavage occurs on the 3'-side of the TT dinucleotide at the point of strand exchange. HJ branch migration catalyzed by RuvA-RuvB allows RuvC to scan DNA until it finds its consensus sequence, where it cleaves and resolves the cruciform DNA. The protein is Crossover junction endodeoxyribonuclease RuvC of Bartonella quintana (strain Toulouse) (Rochalimaea quintana).